Reading from the N-terminus, the 640-residue chain is Chaperone protein DnaK (640 aa).

A Phosphothreonine; by autocatalysis modification is found at Thr199. The tract at residues 603–640 (YAAGETESSAAEPGEPQEKTVDAEVVDAEFEEVKDDKK) is disordered. Acidic residues predominate over residues 626–640 (EVVDAEFEEVKDDKK).

This sequence belongs to the heat shock protein 70 family.

Functionally, acts as a chaperone. The sequence is that of Chaperone protein DnaK from Methylobacillus flagellatus (strain ATCC 51484 / DSM 6875 / VKM B-1610 / KT).